Here is a 128-residue protein sequence, read N- to C-terminus: Large ribosomal subunit protein uL22 (128 aa).

A disordered region spans residues 1-20; it reads MANGHRSQIKRERNAVKDTR. Residues 9–20 show a composition bias toward basic and acidic residues; the sequence is IKRERNAVKDTR.

This sequence belongs to the universal ribosomal protein uL22 family. Part of the 50S ribosomal subunit.

In terms of biological role, this protein binds specifically to 23S rRNA; its binding is stimulated by other ribosomal proteins, e.g. L4, L17, and L20. It is important during the early stages of 50S assembly. It makes multiple contacts with different domains of the 23S rRNA in the assembled 50S subunit and ribosome. Its function is as follows. The globular domain of the protein is located near the polypeptide exit tunnel on the outside of the subunit, while an extended beta-hairpin is found that lines the wall of the exit tunnel in the center of the 70S ribosome. This is Large ribosomal subunit protein uL22 from Lachnospira eligens (strain ATCC 27750 / DSM 3376 / VPI C15-48 / C15-B4) (Eubacterium eligens).